A 490-amino-acid chain; its full sequence is Glutamyl-tRNA(Gln) amidotransferase subunit A (490 aa).

Active-site charge relay system residues include Lys-79 and Ser-154. The active-site Acyl-ester intermediate is Ser-178.

This sequence belongs to the amidase family. GatA subfamily. As to quaternary structure, heterotrimer of A, B and C subunits.

It catalyses the reaction L-glutamyl-tRNA(Gln) + L-glutamine + ATP + H2O = L-glutaminyl-tRNA(Gln) + L-glutamate + ADP + phosphate + H(+). Allows the formation of correctly charged Gln-tRNA(Gln) through the transamidation of misacylated Glu-tRNA(Gln) in organisms which lack glutaminyl-tRNA synthetase. The reaction takes place in the presence of glutamine and ATP through an activated gamma-phospho-Glu-tRNA(Gln). The chain is Glutamyl-tRNA(Gln) amidotransferase subunit A from Roseiflexus castenholzii (strain DSM 13941 / HLO8).